Here is a 339-residue protein sequence, read N- to C-terminus: Ornithine carbamoyltransferase (339 aa).

Residues 56-59 (STRT), R107, and 134-137 (HPTQ) contribute to the carbamoyl phosphate site. L-ornithine contacts are provided by residues N168, D232, and 236-237 (SM). Residues 274–275 (CL) and R320 each bind carbamoyl phosphate.

Belongs to the aspartate/ornithine carbamoyltransferase superfamily. OTCase family.

The protein localises to the cytoplasm. The enzyme catalyses carbamoyl phosphate + L-ornithine = L-citrulline + phosphate + H(+). It functions in the pathway amino-acid biosynthesis; L-arginine biosynthesis; L-arginine from L-ornithine and carbamoyl phosphate: step 1/3. Reversibly catalyzes the transfer of the carbamoyl group from carbamoyl phosphate (CP) to the N(epsilon) atom of ornithine (ORN) to produce L-citrulline. The sequence is that of Ornithine carbamoyltransferase from Buchnera aphidicola subsp. Baizongia pistaciae (strain Bp).